The sequence spans 473 residues: Zinc finger and BTB domain-containing protein 9 (473 aa).

Residues 48–112 (CDVSLLVQGR…IYSGRLRLPL (65 aa)) form the BTB domain. The disordered stretch occupies residues 177–279 (QTPVQSSAST…LELPAPPALP (103 aa)). Residues 182 to 196 (SSASTESPASTESPV) are compositionally biased toward low complexity. The span at 211 to 226 (VEEEEEEEEDDDDEDQ) shows a compositional bias: acidic residues. Polar residues predominate over residues 227–239 (GSATLSQTPQPQR). A Glycyl lysine isopeptide (Lys-Gly) (interchain with G-Cter in SUMO1); alternate cross-link involves residue lysine 286. Lysine 286 is covalently cross-linked (Glycyl lysine isopeptide (Lys-Gly) (interchain with G-Cter in SUMO2); alternate). Glycyl lysine isopeptide (Lys-Gly) (interchain with G-Cter in SUMO2) cross-links involve residues lysine 293 and lysine 307. The disordered stretch occupies residues 293–376 (KEEISGSGTQ…VHGPVKLGGT (84 aa)). A compositionally biased stretch (gly residues) spans 355–364 (SGGGGPGGAG). A Glycyl lysine isopeptide (Lys-Gly) (interchain with G-Cter in SUMO2) cross-link involves residue lysine 382. Residues 411 to 433 (FGCGICNKRFKLKHHLTEHMKTH) form a C2H2-type 1 zinc finger. A C2H2-type 2; atypical zinc finger spans residues 438–460 (HACPHCGRRFRVHACFLRHRDLC).

It localises to the nucleus. Its function is as follows. May be involved in transcriptional regulation. The polypeptide is Zinc finger and BTB domain-containing protein 9 (ZBTB9) (Homo sapiens (Human)).